Consider the following 569-residue polypeptide: Urease subunit alpha (569 aa).

The Urease domain occupies 131 to 569 (GGIDSHIHFI…LPLAQRYFLF (439 aa)). The Ni(2+) site is built by histidine 136, histidine 138, and lysine 219. The residue at position 219 (lysine 219) is an N6-carboxylysine. Histidine 221 is a substrate binding site. 2 residues coordinate Ni(2+): histidine 248 and histidine 274. The Proton donor role is filled by histidine 322. Aspartate 362 serves as a coordination point for Ni(2+).

It belongs to the metallo-dependent hydrolases superfamily. Urease alpha subunit family. Heterotrimer of UreA (gamma), UreB (beta) and UreC (alpha) subunits. Three heterotrimers associate to form the active enzyme. Requires Ni cation as cofactor. In terms of processing, carboxylation allows a single lysine to coordinate two nickel ions.

It localises to the cytoplasm. It carries out the reaction urea + 2 H2O + H(+) = hydrogencarbonate + 2 NH4(+). Its pathway is nitrogen metabolism; urea degradation; CO(2) and NH(3) from urea (urease route): step 1/1. In Herpetosiphon aurantiacus (strain ATCC 23779 / DSM 785 / 114-95), this protein is Urease subunit alpha.